Reading from the N-terminus, the 238-residue chain is Ribosomal RNA small subunit methyltransferase E 1 (238 aa).

It belongs to the RNA methyltransferase RsmE family.

Its subcellular location is the cytoplasm. The enzyme catalyses uridine(1498) in 16S rRNA + S-adenosyl-L-methionine = N(3)-methyluridine(1498) in 16S rRNA + S-adenosyl-L-homocysteine + H(+). In terms of biological role, specifically methylates the N3 position of the uracil ring of uridine 1498 (m3U1498) in 16S rRNA. Acts on the fully assembled 30S ribosomal subunit. In Borreliella burgdorferi (strain ATCC 35210 / DSM 4680 / CIP 102532 / B31) (Borrelia burgdorferi), this protein is Ribosomal RNA small subunit methyltransferase E 1 (rsmE1).